The chain runs to 100 residues: Phosphoribosyl-ATP pyrophosphatase (100 aa).

This sequence belongs to the PRA-PH family.

The protein localises to the cytoplasm. The enzyme catalyses 1-(5-phospho-beta-D-ribosyl)-ATP + H2O = 1-(5-phospho-beta-D-ribosyl)-5'-AMP + diphosphate + H(+). It participates in amino-acid biosynthesis; L-histidine biosynthesis; L-histidine from 5-phospho-alpha-D-ribose 1-diphosphate: step 2/9. The protein is Phosphoribosyl-ATP pyrophosphatase of Haloquadratum walsbyi (strain DSM 16790 / HBSQ001).